Consider the following 328-residue polypeptide: MTQPVLDIQQLHLSFPGFNGDVHALNNVSLQINRGEIVGLVGESGSGKSVTAMLIMRLLPTGSYCVHRGQISLLGEDVLNAREKQLRQWRGARVAMIFQEPMTALNPTRRIGLQMMDVIRHHQPISRREARAKAIDLLEEMQIPDAVEVMSRYPFELSGGMRQRVMIALAFSCEPQLIIADEPTTALDVTVQLQVLRLLKHKARASGTAVLFISHDMAVVSQLCDSVYVMYAGSVIESGVTADVIHHPRHPYTIGLLQCAPEHGVPRQLLPAIPGTVPNLTHLPDGCAFRDRCYAAGAQCENVPALTACGDNNQRCACWYPQQEVISV.

In terms of domain architecture, ABC transporter spans 6-257; that stretch reads LDIQQLHLSF…PRHPYTIGLL (252 aa). 42 to 49 serves as a coordination point for ATP; the sequence is GESGSGKS.

It belongs to the ABC transporter superfamily. The complex is composed of two ATP-binding proteins (DdpD and DdpF), two transmembrane proteins (DdpB and DdpC) and a solute-binding protein (DdpA).

It localises to the cell inner membrane. Its function is as follows. Part of the ABC transporter complex DdpABCDF, which is probably involved in D,D-dipeptide transport. Probably responsible for energy coupling to the transport system. The protein is Probable D,D-dipeptide transport ATP-binding protein DdpD of Escherichia coli (strain K12).